Here is a 221-residue protein sequence, read N- to C-terminus: Tetraspanin-2 (221 aa).

The Cytoplasmic segment spans residues 1–13 (MGRFRGGLRCIKY). A helical membrane pass occupies residues 14 to 34 (LLLGFNLLFWLAGSAVIAFGL). At 35–54 (WFRFGGAIKELSSEDKSPEY) the chain is on the extracellular side. Residues 55 to 75 (FYVGLYVLVGAGALMMAVGFF) traverse the membrane as a helical segment. At 76–90 (GCCGAMRESQCVLGS) the chain is on the cytoplasmic side. The chain crosses the membrane as a helical span at residues 91–111 (FFTCLLVIFAAEVTTGVFAFI). The Extracellular portion of the chain corresponds to 112 to 188 (GKGVAIRHVQ…ETIISVKLQL (77 aa)). An N-linked (GlcNAc...) asparagine glycan is attached at N139. Residues 189 to 209 (IGIVGIGIAGLTIFGMIFSMV) traverse the membrane as a helical segment. The Cytoplasmic portion of the chain corresponds to 210–221 (LCCAIRNSRDVI).

It belongs to the tetraspanin (TM4SF) family.

It localises to the membrane. In terms of biological role, may play a role in signalling in oligodendrocytes in the early stages of their terminal differentiation into myelin-forming glia and may also function in stabilizing the mature sheath. In Homo sapiens (Human), this protein is Tetraspanin-2 (TSPAN2).